The primary structure comprises 831 residues: Periplasmic nitrate reductase (831 aa).

Residues 1–35 (MTISDSRRTFLKASAAAATASAAGIPLANGTAAEA) constitute a signal peptide (tat-type signal). The 4Fe-4S Mo/W bis-MGD-type domain maps to 42 to 98 (IRWDKAACRFCGTGCSVLVGTKEGRVVATQGDPDAPVNRGLNCIKGYFLSKIMYGED). Residues Cys-49, Cys-52, Cys-56, and Cys-84 each contribute to the [4Fe-4S] cluster site. Mo-bis(molybdopterin guanine dinucleotide) is bound by residues Lys-86, Gln-153, Asn-178, Cys-182, 215–222 (WGSNMAEM), 246–250 (STYEH), 265–267 (QTD), Met-375, Gln-379, Asn-485, 511–512 (SD), Lys-534, Asp-561, and 721–730 (TGRVLEHWHS). Trp-797 provides a ligand contact to substrate. Positions 805 and 822 each coordinate Mo-bis(molybdopterin guanine dinucleotide).

Belongs to the prokaryotic molybdopterin-containing oxidoreductase family. NasA/NapA/NarB subfamily. As to quaternary structure, component of the periplasmic nitrate reductase NapAB complex composed of NapA and NapB. It depends on [4Fe-4S] cluster as a cofactor. Mo-bis(molybdopterin guanine dinucleotide) serves as cofactor. Predicted to be exported by the Tat system. The position of the signal peptide cleavage has not been experimentally proven.

It localises to the periplasm. The enzyme catalyses 2 Fe(II)-[cytochrome] + nitrate + 2 H(+) = 2 Fe(III)-[cytochrome] + nitrite + H2O. Catalytic subunit of the periplasmic nitrate reductase complex NapAB. Receives electrons from NapB and catalyzes the reduction of nitrate to nitrite. This chain is Periplasmic nitrate reductase, found in Dinoroseobacter shibae (strain DSM 16493 / NCIMB 14021 / DFL 12).